Here is a 611-residue protein sequence, read N- to C-terminus: MAGLVPVPVSSAAATTSAPLAPVVLPKTSESEQLLKIRHSMSHVMAMAVQKLFPNAQVTIGPWTETGFYYDFDNPEPFTEDDLKAIKKEMGKIIGRKLPLERIEVSRDEAETRIKAQNEPYKLEILERLQEPITLYTLGDQWWDLCAGPHVENTKELHPKAFELESVAGAYWRGDETKAQLQRIYGTAWETPEQLAEHKRRKVEALRRDHRRLGKDLELFSIEDEAGAGLVFWHPRGARMRLLIEDFWRQAHFEGGYELLYTPHVADISLWKTSGHLDFYAESMFGPMQVDEREYQLKPMNCPFHVLTYASKLRSYRELPIRWAELGTVYRYERPGVMHGLMRVRGFTQDDAHVFCLPDQISDEILRILDLTERILSTFDFNHYEINLSTRPEKSIGSEAVWELATKGLTEALERKGWNFKIDEGGGAFYGPKIDLKIEDAIGRMWQCSTIQLDFNLPERFGLDYVAADGSKQQPIMIHRAIFGSLERFFGIMTENYAGDFPFWLAPEQIRLLPVTDDVQPYAEQVLNQLKTAGIRATIDQSGDRLGKIIRTGEQMKIPVLAVIGAKEAEQNAISLRSRRDGDLGVTSVDALLKAAQRANAERQPGLGLNP.

Positions 209 to 502 (DHRRLGKDLE…MTENYAGDFP (294 aa)) are catalytic. Zn(2+) is bound by residues cysteine 302, histidine 353, and histidine 479.

The protein belongs to the class-II aminoacyl-tRNA synthetase family. As to quaternary structure, homodimer. Zn(2+) serves as cofactor.

It is found in the cytoplasm. The enzyme catalyses tRNA(Thr) + L-threonine + ATP = L-threonyl-tRNA(Thr) + AMP + diphosphate + H(+). Catalyzes the attachment of threonine to tRNA(Thr) in a two-step reaction: L-threonine is first activated by ATP to form Thr-AMP and then transferred to the acceptor end of tRNA(Thr). Also edits incorrectly charged L-seryl-tRNA(Thr). This Synechococcus sp. (strain CC9902) protein is Threonine--tRNA ligase.